A 103-amino-acid polypeptide reads, in one-letter code: Flagellar hook-basal body complex protein FliE (103 aa).

It belongs to the FliE family.

The protein resides in the bacterial flagellum basal body. The sequence is that of Flagellar hook-basal body complex protein FliE from Yersinia enterocolitica serotype O:8 / biotype 1B (strain NCTC 13174 / 8081).